A 116-amino-acid chain; its full sequence is Large ribosomal subunit protein bL19c (116 aa).

Belongs to the bacterial ribosomal protein bL19 family.

The protein localises to the plastid. It localises to the chloroplast. This is Large ribosomal subunit protein bL19c from Cyanidium caldarium (Red alga).